The following is a 154-amino-acid chain: Ribonuclease H (154 aa).

Positions 1 to 141 (MKRIEAYTDG…ADELARAGME (141 aa)) constitute an RNase H type-1 domain. D9, E47, D69, and D133 together coordinate Mg(2+).

The protein belongs to the RNase H family. As to quaternary structure, monomer. It depends on Mg(2+) as a cofactor.

The protein localises to the cytoplasm. It carries out the reaction Endonucleolytic cleavage to 5'-phosphomonoester.. Its function is as follows. Endonuclease that specifically degrades the RNA of RNA-DNA hybrids. In Brucella abortus (strain 2308), this protein is Ribonuclease H.